A 492-amino-acid polypeptide reads, in one-letter code: B3 domain-containing protein REM3 (492 aa).

Positions 12-104 (NRPFFVRSLA…VFHVTPSGRS (93 aa)) form a DNA-binding region, TF-B3 1. Low complexity predominate over residues 105-116 (FSQIRTSSSSGD). The interval 105 to 134 (FSQIRTSSSSGDYDSDDDDDEAGDDDSDSK) is disordered. Residues 117 to 131 (YDSDDDDDEAGDDDS) are compositionally biased toward acidic residues. 2 DNA-binding regions (TF-B3) span residues 154–250 (YCLL…LCFK) and 286–382 (FLTV…FCSE). Over residues 385 to 395 (IEQEEAPEERG) the composition is skewed to basic and acidic residues. The interval 385 to 427 (IEQEEAPEERGTPLPKRARVSAEVGHSRRTQAPNKSSDDPKIL) is disordered.

The protein resides in the nucleus. The protein is B3 domain-containing protein REM3 (REM3) of Arabidopsis thaliana (Mouse-ear cress).